Reading from the N-terminus, the 134-residue chain is uncharacterized protein (134 aa).

This is an uncharacterized protein from Human cytomegalovirus (strain AD169) (HHV-5).